We begin with the raw amino-acid sequence, 360 residues long: Serine/threonine-protein kinase SAPK4 (360 aa).

The Protein kinase domain occupies 4-260 (YEAVRDIGSG…MKEIKSHPWF (257 aa)). Residues 10–18 (IGSGNFGVA) and Lys33 contribute to the ATP site. Residue Asp123 is the Proton acceptor of the active site. Residues 303-360 (TMPKSSRTGYWSDAGSDEEEKEEEERPEENEEEEEDEYDKRVKEVHASGELRMSSLRI) form a disordered region. Over residues 317-339 (GSDEEEKEEEERPEENEEEEEDE) the composition is skewed to acidic residues. A compositionally biased stretch (basic and acidic residues) spans 340 to 351 (YDKRVKEVHASG).

It belongs to the protein kinase superfamily. Ser/Thr protein kinase family. Post-translationally, may be phosphorylated. Expressed in leaf blades, leaf sheaths and roots. Expressed in shoots and roots of young seedlings.

The enzyme catalyses L-seryl-[protein] + ATP = O-phospho-L-seryl-[protein] + ADP + H(+). The catalysed reaction is L-threonyl-[protein] + ATP = O-phospho-L-threonyl-[protein] + ADP + H(+). Activated by hyperosmotic stress. Functionally, may play a role in signal transduction of hyperosmotic response. This is Serine/threonine-protein kinase SAPK4 (SAPK4) from Oryza sativa subsp. japonica (Rice).